A 468-amino-acid polypeptide reads, in one-letter code: Trehalose-2-sulfate acyltransferase PapA2 (468 aa).

This sequence belongs to the PapA acyltransferase family.

The catalysed reaction is 2-O-sulfo-alpha,alpha-trehalose + hexadecanoyl-CoA = 2-O-sulfo-2'-O-hexadecanoyl-alpha,alpha-trehalose + CoA. Functionally, required for the biosynthesis of sulfolipid-1 (SL-1), a major mycobacterial cell wall lipid. Catalyzes the acylation of trehalose-2-sulfate by adding the palmitoyl group at the 2'-position to yield the intermediate trehalose-2-sulfate-2'-palmitate (SL659). The sequence is that of Trehalose-2-sulfate acyltransferase PapA2 (papA2) from Mycobacterium bovis (strain ATCC BAA-935 / AF2122/97).